A 184-amino-acid polypeptide reads, in one-letter code: Acireductone dioxygenase 4 (184 aa).

The Fe(2+) site is built by His-86, His-88, Glu-92, and His-131. Ni(2+) is bound by residues His-86, His-88, Glu-92, and His-131.

Belongs to the acireductone dioxygenase (ARD) family. It depends on Fe(2+) as a cofactor. Ni(2+) is required as a cofactor.

It localises to the cytoplasm. The protein resides in the nucleus. The catalysed reaction is 1,2-dihydroxy-5-(methylsulfanyl)pent-1-en-3-one + O2 = 4-methylsulfanyl-2-oxobutanoate + formate + 2 H(+). It carries out the reaction 1,2-dihydroxy-5-(methylsulfanyl)pent-1-en-3-one + O2 = 3-(methylsulfanyl)propanoate + CO + formate + 2 H(+). It functions in the pathway amino-acid biosynthesis; L-methionine biosynthesis via salvage pathway; L-methionine from S-methyl-5-thio-alpha-D-ribose 1-phosphate: step 5/6. In terms of biological role, catalyzes 2 different reactions between oxygen and the acireductone 1,2-dihydroxy-3-keto-5-methylthiopentene (DHK-MTPene) depending upon the metal bound in the active site. Fe-containing acireductone dioxygenase (Fe-ARD) produces formate and 2-keto-4-methylthiobutyrate (KMTB), the alpha-ketoacid precursor of methionine in the methionine recycle pathway. Ni-containing acireductone dioxygenase (Ni-ARD) produces methylthiopropionate, carbon monoxide and formate, and does not lie on the methionine recycle pathway. The sequence is that of Acireductone dioxygenase 4 (ARD4) from Oryza sativa subsp. japonica (Rice).